An 86-amino-acid chain; its full sequence is Small ribosomal subunit protein bS20 (86 aa).

Positions 1-22 (MANIKSQIKRIRTNERRRLRNQ) are disordered. The segment covering 7–20 (QIKRIRTNERRRLR) has biased composition (basic residues).

This sequence belongs to the bacterial ribosomal protein bS20 family.

Binds directly to 16S ribosomal RNA. The sequence is that of Small ribosomal subunit protein bS20 from Mycolicibacterium smegmatis (strain ATCC 700084 / mc(2)155) (Mycobacterium smegmatis).